A 386-amino-acid chain; its full sequence is Protein RETICULATA-RELATED 4, chloroplastic (386 aa).

Residues 1–61 (MAIASCFFCV…RRVPITPVLS (61 aa)) constitute a chloroplast transit peptide. The disordered stretch occupies residues 61-99 (SASSGNGGSDNNGGGLSGGGGGGDGGKNDGDGHGDEDRD). Residues 65 to 85 (GNGGSDNNGGGLSGGGGGGDG) show a composition bias toward gly residues. A compositionally biased stretch (basic and acidic residues) spans 86 to 99 (GKNDGDGHGDEDRD). Transmembrane regions (helical) follow at residues 201–221 (VVFA…YLPA) and 273–293 (KLFA…NAFI).

Belongs to the RETICULATA family.

The protein resides in the plastid. It is found in the chloroplast membrane. Its function is as follows. May play a role in leaf development. The polypeptide is Protein RETICULATA-RELATED 4, chloroplastic (Arabidopsis thaliana (Mouse-ear cress)).